We begin with the raw amino-acid sequence, 851 residues long: Venom phosphodiesterase 1 (851 aa).

Residues 1 to 23 form the signal peptide; the sequence is MIQQKVLFISLVAVTLGLGLGLG. SMB domains follow at residues 30-73 and 74-118; these read PQVS…VLPT and QSWS…GETS. 16 disulfide bridges follow: Cys-34/Cys-38, Cys-34/Cys-51, Cys-38/Cys-69, Cys-49/Cys-51, Cys-49/Cys-62, Cys-55/Cys-61, Cys-62/Cys-69, Cys-78/Cys-83, Cys-78/Cys-95, Cys-83/Cys-113, Cys-93/Cys-95, Cys-93/Cys-106, Cys-99/Cys-105, Cys-106/Cys-113, Cys-124/Cys-170, and Cys-132/Cys-344. A glycan (N-linked (GlcNAc...) asparagine) is linked at Asn-39. A Cell attachment site motif is present at residues 58-60; the sequence is RQA. 2 residues coordinate a divalent metal cation: Asp-147 and Thr-185. Catalysis depends on Thr-185, which acts as the AMP-threonine intermediate. N-linked (GlcNAc...) asparagine glycans are attached at residues Asn-216, Asn-259, and Asn-270. Lys-271 contributes to the AMP binding site. 4 residues coordinate a divalent metal cation: Asp-305, His-309, Asp-352, and His-353. His-309 is a binding site for AMP. 6 cysteine pairs are disulfide-bonded: Cys-360-Cys-457, Cys-408-Cys-793, Cys-541-Cys-599, Cys-554-Cys-654, Cys-556-Cys-639, and Cys-762-Cys-772. N-linked (GlcNAc...) asparagine glycosylation is present at Asn-405. His-462 is an a divalent metal cation binding site. N-linked (GlcNAc...) asparagine glycans are attached at residues Asn-512, Asn-594, Asn-674, and Asn-745.

The protein belongs to the nucleotide pyrophosphatase/phosphodiesterase family. Monomer cleaved in two subunits; disulfide-linked. Is synthesized as a single-chain protein and is subsequently cleaved to form a two-subunit protein held together with disulfide bonds. Requires a divalent metal cation as cofactor. Expressed by venom gland.

The protein resides in the secreted. The catalysed reaction is ADP + H2O = AMP + phosphate + H(+). Functionally, hydrolyzes ADP with high activity. Shows weak or no activity on 5'-AMP, 5'-GMP, 3'-AMP, ATP, cAMP, and cGMP. Is devoid of monophosphatase and proteinase activities. Dose-dependently inhibits platelet aggregation induced by ADP and collagen. The sequence is that of Venom phosphodiesterase 1 from Crotalus adamanteus (Eastern diamondback rattlesnake).